Reading from the N-terminus, the 385-residue chain is ATP phosphoribosyltransferase regulatory subunit (385 aa).

Belongs to the class-II aminoacyl-tRNA synthetase family. HisZ subfamily. Heteromultimer composed of HisG and HisZ subunits.

It localises to the cytoplasm. It functions in the pathway amino-acid biosynthesis; L-histidine biosynthesis; L-histidine from 5-phospho-alpha-D-ribose 1-diphosphate: step 1/9. Required for the first step of histidine biosynthesis. May allow the feedback regulation of ATP phosphoribosyltransferase activity by histidine. This chain is ATP phosphoribosyltransferase regulatory subunit, found in Bordetella pertussis (strain Tohama I / ATCC BAA-589 / NCTC 13251).